Here is a 433-residue protein sequence, read N- to C-terminus: 3-phosphoshikimate 1-carboxyvinyltransferase (433 aa).

Lysine 23, serine 24, and arginine 28 together coordinate 3-phosphoshikimate. Lysine 23 contributes to the phosphoenolpyruvate binding site. 2 residues coordinate phosphoenolpyruvate: glycine 95 and arginine 123. The 3-phosphoshikimate site is built by serine 167, glutamine 169, aspartate 317, and lysine 344. Glutamine 169 provides a ligand contact to phosphoenolpyruvate. Residue aspartate 317 is the Proton acceptor of the active site. Phosphoenolpyruvate-binding residues include arginine 348 and arginine 390.

Belongs to the EPSP synthase family. In terms of assembly, monomer.

It is found in the cytoplasm. The enzyme catalyses 3-phosphoshikimate + phosphoenolpyruvate = 5-O-(1-carboxyvinyl)-3-phosphoshikimate + phosphate. It participates in metabolic intermediate biosynthesis; chorismate biosynthesis; chorismate from D-erythrose 4-phosphate and phosphoenolpyruvate: step 6/7. In terms of biological role, catalyzes the transfer of the enolpyruvyl moiety of phosphoenolpyruvate (PEP) to the 5-hydroxyl of shikimate-3-phosphate (S3P) to produce enolpyruvyl shikimate-3-phosphate and inorganic phosphate. The sequence is that of 3-phosphoshikimate 1-carboxyvinyltransferase from Staphylococcus epidermidis (strain ATCC 35984 / DSM 28319 / BCRC 17069 / CCUG 31568 / BM 3577 / RP62A).